The sequence spans 250 residues: Aquaporin TIP1-1 (250 aa).

2 helical membrane passes run 24 to 44 and 56 to 76; these read FAEFISTLIFVFAGQGSGMAF and AGLIAAAVAHAFALFVAVSVG. Positions 85-87 match the NPA 1 motif; sequence NPA. Transmembrane regions (helical) follow at residues 104–126, 143–163, and 172–192; these read LLYWVAQLLGSTVACFLLRFSTG, ALVLEIVMTFGLVYTVYATAV, and TIAPIAIGFIVGANILVGGAF. Residues 198-200 carry the NPA 2 motif; sequence NPA. The chain crosses the membrane as a helical span at residues 218–238; that stretch reads YWVGPLIGGGLAGVIYELLFI.

The protein belongs to the MIP/aquaporin (TC 1.A.8) family. TIP (TC 1.A.8.10) subfamily. In terms of tissue distribution, expressed in roots, shoots, leaves, tassels, ears and embryos. Expressed in meristems and zones of cell enlargement: tips of primary and lateral roots, leaf primordia, and male and female inflorescence meristems. Highly expressed in the root epidermis and endodermis, parenchyma cells surrounding mature xylem vessels in the root and the stem, phloem companion cells and a ring of cells around the phloem strand in the stem and the leaf sheath, and the basal endosperm transfer cells in developing kernels.

The protein localises to the vacuole membrane. In terms of biological role, water channel required to facilitate the transport of water across cell membrane. May support the rapid influx of water into vacuoles during cell expansion, permit osmotic equilibration between the cytosol and the vacuolar content and rapid transcellular water flow through living cells. Its function is impaired by Hg(2+). The sequence is that of Aquaporin TIP1-1 (TIP1-1) from Zea mays (Maize).